Consider the following 481-residue polypeptide: ATP synthase subunit beta, chloroplastic (481 aa).

163–170 (GGAGVGKT) serves as a coordination point for ATP.

This sequence belongs to the ATPase alpha/beta chains family. As to quaternary structure, F-type ATPases have 2 components, CF(1) - the catalytic core - and CF(0) - the membrane proton channel. CF(1) has five subunits: alpha(3), beta(3), gamma(1), delta(1), epsilon(1). CF(0) has four main subunits: a(1), b(1), b'(1) and c(9-12).

The protein resides in the plastid. Its subcellular location is the chloroplast thylakoid membrane. It carries out the reaction ATP + H2O + 4 H(+)(in) = ADP + phosphate + 5 H(+)(out). Its function is as follows. Produces ATP from ADP in the presence of a proton gradient across the membrane. The catalytic sites are hosted primarily by the beta subunits. The polypeptide is ATP synthase subunit beta, chloroplastic (Tupiella akineta (Green alga)).